The chain runs to 444 residues: Phosphoglucosamine mutase (444 aa).

Catalysis depends on serine 102, which acts as the Phosphoserine intermediate. Mg(2+) contacts are provided by serine 102, aspartate 241, aspartate 243, and aspartate 245. Position 102 is a phosphoserine (serine 102).

It belongs to the phosphohexose mutase family. The cofactor is Mg(2+). Post-translationally, activated by phosphorylation.

The catalysed reaction is alpha-D-glucosamine 1-phosphate = D-glucosamine 6-phosphate. In terms of biological role, catalyzes the conversion of glucosamine-6-phosphate to glucosamine-1-phosphate. The protein is Phosphoglucosamine mutase of Leptothrix cholodnii (strain ATCC 51168 / LMG 8142 / SP-6) (Leptothrix discophora (strain SP-6)).